We begin with the raw amino-acid sequence, 156 residues long: Small ribosomal subunit protein uS7 (156 aa).

This sequence belongs to the universal ribosomal protein uS7 family. Part of the 30S ribosomal subunit. Contacts proteins S9 and S11.

Its function is as follows. One of the primary rRNA binding proteins, it binds directly to 16S rRNA where it nucleates assembly of the head domain of the 30S subunit. Is located at the subunit interface close to the decoding center, probably blocks exit of the E-site tRNA. The sequence is that of Small ribosomal subunit protein uS7 from Salmonella choleraesuis (strain SC-B67).